The sequence spans 267 residues: Meiosis-specific protein ISC10 (267 aa).

Basic and acidic residues predominate over residues 1–13 (MDVDERLHQDENQ). The disordered stretch occupies residues 1–26 (MDVDERLHQDENQTHPFSQKKSSSFL). Residues 14–25 (THPFSQKKSSSF) are compositionally biased toward polar residues.

Functionally, indispensable for spore formation. This Saccharomyces cerevisiae (strain ATCC 204508 / S288c) (Baker's yeast) protein is Meiosis-specific protein ISC10 (ISC10).